The primary structure comprises 773 residues: Lon protease homolog 2, peroxisomal (773 aa).

The 190-residue stretch at 9–198 (LPVIVVDSGV…MCEKWMQMQR (190 aa)) folds into the Lon N-terminal domain. An ATP-binding site is contributed by 336-343 (GPPGIGKT). Positions 587–766 (PLPPGVCFGL…EDVIEAMMEK (180 aa)) constitute a Lon proteolytic domain. Catalysis depends on residues serine 672 and lysine 715. The short motif at 771-773 (AKL) is the Microbody targeting signal element.

Belongs to the peptidase S16 family.

It localises to the peroxisome matrix. It catalyses the reaction Hydrolysis of proteins in presence of ATP.. Its function is as follows. ATP-dependent serine protease that mediates the selective degradation of misfolded and unassembled polypeptides in the peroxisomal matrix. Necessary for type 2 peroxisome targeting signal (PTS2)-containing protein processing and facilitates peroxisome matrix protein import. The chain is Lon protease homolog 2, peroxisomal from Caenorhabditis briggsae.